Here is a 323-residue protein sequence, read N- to C-terminus: MSDNLVLPTYDDVASASERIKKFANKTPVLTSSTVNKEFVAEVFFKCENFQKMGAFKFRGALNALSQLNEAQRKAGVLTFSSGNHAQAIALSAKILGIPAKIIMPLDAPEAKVAATKGYGGQVIMYDRYKDDREKMAKEISEREGLTIIPPYDHPHVLAGQGTAAKELFEEVGPLDALFVCLGGGGLLSGSALAARHFAPNCEVYGVEPEAGNDGQQSFRKGSIVHIDTPKTIADGAQTQHLGNYTFSIIKEKVDDILTVSDEELIDCLKFYAARMKIVVEPTGCLSFAAARAMKEKLKNKRIGIIISGGNVDIERYAHFLSQ.

3 residues coordinate ATP: Ser-32, Ser-33, and Lys-52. Catalysis depends on Lys-57, which acts as the Proton acceptor. Lysino-D-alanine (Lys); alternate is present on Lys-57. Position 57 is an N6-(pyridoxal phosphate)lysine; alternate (Lys-57). Thr-79 lines the Ca(2+) pocket. The Proton acceptor role is filled by Ser-82. Residue Asn-84 participates in pyridoxal 5'-phosphate binding. Residues Gln-87 and Tyr-119 each coordinate ATP. Asp-176 contributes to the Mg(2+) binding site. Positions 183, 184, 185, 186, and 187 each coordinate pyridoxal 5'-phosphate. 3 residues coordinate Ca(2+): Glu-208, Gly-212, and Asp-214. Residues Glu-208, Gly-212, and Asp-214 each coordinate Mg(2+). The Mn(2+) site is built by Glu-208, Gly-212, and Asp-214. Lys-277 serves as a coordination point for ATP. Ser-308 is a binding site for pyridoxal 5'-phosphate. Asn-311 contacts ATP.

The protein belongs to the serine/threonine dehydratase family. As to quaternary structure, homodimer. Mg(2+) serves as cofactor. Requires Mn(2+) as cofactor. Ca(2+) is required as a cofactor. The cofactor is pyridoxal 5'-phosphate. Modification of the active site Lys by its substrate Ser to lysino-D-alanine reduces but does not abolish enzyme activity.

The enzyme catalyses L-serine = D-serine. The catalysed reaction is L-serine = pyruvate + NH4(+). It carries out the reaction D-serine = pyruvate + NH4(+). With respect to regulation, allosterically activated by ATP, by magnesium, and possibly also by other divalent metal cations. Functionally, catalyzes the synthesis of D-serine from L-serine. Has dehydratase activity towards both L-serine and D-serine. This Schizosaccharomyces pombe (strain 972 / ATCC 24843) (Fission yeast) protein is Serine racemase.